Here is a 132-residue protein sequence, read N- to C-terminus: Holo-[acyl-carrier-protein] synthase (132 aa).

The Mg(2+) site is built by D8 and E64.

It belongs to the P-Pant transferase superfamily. AcpS family. Mg(2+) is required as a cofactor.

Its subcellular location is the cytoplasm. It catalyses the reaction apo-[ACP] + CoA = holo-[ACP] + adenosine 3',5'-bisphosphate + H(+). In terms of biological role, transfers the 4'-phosphopantetheine moiety from coenzyme A to a Ser of acyl-carrier-protein. The chain is Holo-[acyl-carrier-protein] synthase from Shewanella sediminis (strain HAW-EB3).